Reading from the N-terminus, the 389-residue chain is Succinate--CoA ligase [ADP-forming] subunit beta (389 aa).

The region spanning 9–244 (KQLLAEYGIP…KTQEDETEVT (236 aa)) is the ATP-grasp domain. ATP contacts are provided by residues K46, 53–55 (GRG), G102, and E107. Residues N199 and D213 each coordinate Mg(2+). Residues N264 and 321–323 (GIV) contribute to the substrate site.

It belongs to the succinate/malate CoA ligase beta subunit family. Heterotetramer of two alpha and two beta subunits. It depends on Mg(2+) as a cofactor.

The enzyme catalyses succinate + ATP + CoA = succinyl-CoA + ADP + phosphate. It carries out the reaction GTP + succinate + CoA = succinyl-CoA + GDP + phosphate. Its pathway is carbohydrate metabolism; tricarboxylic acid cycle; succinate from succinyl-CoA (ligase route): step 1/1. Its function is as follows. Succinyl-CoA synthetase functions in the citric acid cycle (TCA), coupling the hydrolysis of succinyl-CoA to the synthesis of either ATP or GTP and thus represents the only step of substrate-level phosphorylation in the TCA. The beta subunit provides nucleotide specificity of the enzyme and binds the substrate succinate, while the binding sites for coenzyme A and phosphate are found in the alpha subunit. This Xanthomonas campestris pv. campestris (strain 8004) protein is Succinate--CoA ligase [ADP-forming] subunit beta.